Reading from the N-terminus, the 310-residue chain is Cytochrome P450 monooxygenase ppzG (310 aa).

Cysteine 288 contacts heme.

Belongs to the cytochrome P450 family. The cofactor is heme.

Its pathway is secondary metabolite biosynthesis. Its function is as follows. Cytochrome P450 monooxygenase; part of the gene cluster that mediates the biosynthesis of pyrrolopyrazines, secondary metabolites showing insecticidal activity. The role of ppzG within the pathway has still to be determined. The single multifunctional NRPS ppzA is sufficient to produce peramine via condensation of 1-pyrroline-5-carboxylate and arginine, N-methylation of the alpha-amino group of arginine and reduction of the thioester and the cyclization to form an iminium ion resulting in release from the peptide synthetase. Deprotonation of this intermediate and oxidation of the pyrroline ring would give rise to peramine. In Epichloe species that produce only peramine, the peramine synthetase gene is not localized in a gene cluster, in contrast to Metarhizium species that contain additional pyrrolopyrazine biosynthesis genes. The 2-oxoglutarate-Fe(II) type oxidoreductase ppzC hydroxylates peramine to yield the newly identified compound 8-hydroxyperamine whereas ppzD converts L-proline into trans-4-hydroxy-L-proline, a precursor of peramine biosynthesis. The polypeptide is Cytochrome P450 monooxygenase ppzG (ppzG) (Metarhizium majus (strain ARSEF 297)).